A 523-amino-acid chain; its full sequence is GMP synthase [glutamine-hydrolyzing] (523 aa).

The region spanning 8 to 205 is the Glutamine amidotransferase type-1 domain; it reads KILILDFGSQ…VVNICGCETK (198 aa). Cys-85 serves as the catalytic Nucleophile. Catalysis depends on residues His-179 and Glu-181. Residues 206-398 form the GMPS ATP-PPase domain; it reads WTAENIIEDA…LGLPAEMINR (193 aa). 233-239 is a binding site for ATP; it reads SGGVDSS.

Homodimer.

It catalyses the reaction XMP + L-glutamine + ATP + H2O = GMP + L-glutamate + AMP + diphosphate + 2 H(+). The protein operates within purine metabolism; GMP biosynthesis; GMP from XMP (L-Gln route): step 1/1. Its function is as follows. Catalyzes the synthesis of GMP from XMP. This is GMP synthase [glutamine-hydrolyzing] from Haemophilus influenzae (strain PittEE).